The following is a 141-amino-acid chain: Transcription antitermination protein NusB (141 aa).

Belongs to the NusB family.

Functionally, involved in transcription antitermination. Required for transcription of ribosomal RNA (rRNA) genes. Binds specifically to the boxA antiterminator sequence of the ribosomal RNA (rrn) operons. In Neisseria meningitidis serogroup B (strain ATCC BAA-335 / MC58), this protein is Transcription antitermination protein NusB.